Reading from the N-terminus, the 250-residue chain is Protein orai-2 (250 aa).

4 helical membrane passes run 66-83 (TSAL…EVQL), 94-114 (LIAF…ALLI), 148-168 (LAWG…VVLL), and 192-212 (AALV…VFTI).

Belongs to the Orai family. As to quaternary structure, oligomerizes in homomeric and heteromeric ORAI complexes. Native CRAC channels most likely consist of hexameric ORAI heteromers, implying that diverse ORAI1, ORAI2 and ORAI3 subunit combinations with distinct biophysical properties can operate in a cell-type specific way. Interacts with STIM1; this regulates channel activity. Interacts with CRACR2A/EFCAB4B.

Its subcellular location is the cell membrane. The enzyme catalyses Ca(2+)(in) = Ca(2+)(out). Its activity is regulated as follows. CRAC channels are regulated by fast Ca(2+)-dependent inactivation (FCDI), a mechanism that limits Ca(2+) influx and cell toxicity. ORAI2 channels display prominent FCDI. Inhibited by lanthanides such as Gd(3+) ions. In terms of biological role, pore-forming subunit of inward rectifying Ca(2+) release-activated Ca(2+) (CRAC) channels. Assembles with ORAI1 and ORAI3 to form hexameric CRAC channels that mediate Ca(2+) influx upon depletion of endoplasmic reticulum Ca(2+) store and channel activation by Ca(2+) sensor STIM1, a process known as store-operated Ca(2+) entry (SOCE). Various pore subunit combinations may account for distinct CRAC channel spatiotemporal and cell-type specific dynamics. ORAI1 mainly contributes to the generation of Ca(2+) plateaus involved in sustained Ca(2+) entry and is dispensable for cytosolic Ca(2+) oscillations, whereas ORAI2 and ORAI3 generate oscillatory patterns. CRAC channels assemble in Ca(2+) signaling microdomains where Ca(2+) influx is coupled to calmodulin and calcineurin signaling and activation of NFAT transcription factors recruited to ORAI1 via AKAP5. CRAC channels are the main pathway for Ca(2+) influx in T cells and promote the immune response to pathogens by activating NFAT-dependent cytokine and chemokine transcription. The protein is Protein orai-2 (Orai2) of Mus musculus (Mouse).